The chain runs to 189 residues: Small ribosomal subunit protein uS7 (189 aa).

It belongs to the universal ribosomal protein uS7 family. Component of the small ribosomal subunit.

The protein localises to the cytoplasm. The polypeptide is Small ribosomal subunit protein uS7 (RPS5) (Encephalitozoon cuniculi (strain GB-M1) (Microsporidian parasite)).